Here is a 129-residue protein sequence, read N- to C-terminus: uncharacterized protein (129 aa).

Residues 1–20 (MIYPLFRICILGAFLLGSYA) form the signal peptide.

This is an uncharacterized protein from Saccharomyces cerevisiae (strain ATCC 204508 / S288c) (Baker's yeast).